The sequence spans 376 residues: Histidinol-phosphate aminotransferase (376 aa).

The interval 1-21 (MQPRDLSAHEPYVPGRGTKEV) is disordered. An N6-(pyridoxal phosphate)lysine modification is found at Lys-222.

Belongs to the class-II pyridoxal-phosphate-dependent aminotransferase family. Histidinol-phosphate aminotransferase subfamily. Pyridoxal 5'-phosphate serves as cofactor.

It carries out the reaction L-histidinol phosphate + 2-oxoglutarate = 3-(imidazol-4-yl)-2-oxopropyl phosphate + L-glutamate. Its pathway is amino-acid biosynthesis; L-histidine biosynthesis; L-histidine from 5-phospho-alpha-D-ribose 1-diphosphate: step 7/9. The chain is Histidinol-phosphate aminotransferase from Haloquadratum walsbyi (strain DSM 16790 / HBSQ001).